A 345-amino-acid polypeptide reads, in one-letter code: uncharacterized protein (345 aa).

Belongs to the proline racemase family.

This is an uncharacterized protein from Bacillus anthracis.